Here is a 57-residue protein sequence, read N- to C-terminus: Insulin (57 aa).

3 cysteine pairs are disulfide-bonded: Cys-12-Cys-43, Cys-24-Cys-56, and Cys-42-Cys-47.

This sequence belongs to the insulin family. Heterodimer of a B chain and an A chain linked by two disulfide bonds.

It localises to the secreted. Functionally, insulin decreases blood glucose concentration. It increases cell permeability to monosaccharides, amino acids and fatty acids. It accelerates glycolysis, the pentose phosphate cycle, and glycogen synthesis in liver. This chain is Insulin (ins), found in Lampetra fluviatilis (European river lamprey).